A 327-amino-acid chain; its full sequence is uncharacterized protein (327 aa).

The first 24 residues, 1-24, serve as a signal peptide directing secretion; sequence MAMACLCLANISWATVCANSTGVA.

Belongs to the fimbrial protein family.

Its subcellular location is the fimbrium. Part of the sfmACDHF fimbrial operon. Could contribute to adhesion to various surfaces in specific environmental niches. Increases adhesion to eukaryotic T24 bladder epithelial cells in the absence of fim genes. This is an uncharacterized protein from Escherichia coli (strain K12).